The sequence spans 313 residues: Interferon-inducible double-stranded RNA-dependent protein kinase activator A (313 aa).

A compositionally biased stretch (basic and acidic residues) spans 1–18 (MSQSRHRAEAPPLEREDS). A disordered region spans residues 1–21 (MSQSRHRAEAPPLEREDSGTF). Sufficient for self-association and interaction with TARBP2 regions lie at residues 1 to 103 (MSQS…KANA), 102 to 195 (NASI…FSNI), and 195 to 313 (ISPE…AERK). Phosphoserine is present on serine 18. DRBM domains follow at residues 34–101 (TPIQ…ILKA), 126–194 (NPIG…KFSN), and 240–308 (DYIQ…YLKI). A phosphoserine mark is found at serine 167, serine 246, and serine 287.

Belongs to the PRKRA family. In terms of assembly, homodimer. Interacts with EIF2AK2/PKR through its DRBM domains. Interacts with DICER1, AGO2 and TARBP2. Also able to interact with dsRNA. Interacts with UBC9. Forms a complex with UBC9 and p53/TP53. Interacts with DUS2L (via DRBM domain). Interacts with RIGI. (Microbial infection) Interacts with ebolavirus protein VP35; this interaction inhibits the interaction between RIGI and PRKRA. In addition, this interaction disrupts the interaction between VP35 and the viral polymerase L. So the VP35-PRKRA interaction plays a critical role in determining the outcome of ebolavirus infection. The interaction PRKRA-VP35 also prevents PRKRA binding to DICER1 and thus allows the virus to counteract host RNA silencing. As to quaternary structure, (Microbial infection) Interacts with human herpesvirus 8 protein MTA/ORF57; this interaction inhibits stress granule formation. Post-translationally, phosphorylated at Ser-246 in unstressed cells and at Ser-287 in stressed cells. Phosphorylation at Ser-246 appears to be a prerequisite for subsequent phosphorylation at Ser-287. Phosphorylation at Ser-246 and Ser-287 are necessary for activation of EIF2AK2/PKR under conditions of stress.

The protein localises to the cytoplasm. It localises to the perinuclear region. Activates EIF2AK2/PKR in the absence of double-stranded RNA (dsRNA), leading to phosphorylation of EIF2S1/EFI2-alpha and inhibition of translation and induction of apoptosis. Required for siRNA production by DICER1 and for subsequent siRNA-mediated post-transcriptional gene silencing. Does not seem to be required for processing of pre-miRNA to miRNA by DICER1. Promotes UBC9-p53/TP53 association and sumoylation and phosphorylation of p53/TP53 at 'Lys-386' at 'Ser-392' respectively and enhances its activity in a EIF2AK2/PKR-dependent manner. This Homo sapiens (Human) protein is Interferon-inducible double-stranded RNA-dependent protein kinase activator A (PRKRA).